Consider the following 377-residue polypeptide: Chaperone protein DnaJ (377 aa).

Positions 5–70 constitute a J domain; sequence DFYEVLGVER…SKRAAYDQYG (66 aa). The segment at 136 to 214 adopts a CR-type zinc-finger fold; the sequence is GTTVTIRVPT…CHGQGRVEEQ (79 aa). Zn(2+)-binding residues include C149, C152, C166, C169, C188, C191, C202, and C205. 4 CXXCXGXG motif repeats span residues 149-156, 166-173, 188-195, and 202-209; these read CKTCNGSG, CTTCGGIG, CPRCHGTG, and CGSCHGQG.

Belongs to the DnaJ family. Homodimer. Zn(2+) serves as cofactor.

It is found in the cytoplasm. Participates actively in the response to hyperosmotic and heat shock by preventing the aggregation of stress-denatured proteins and by disaggregating proteins, also in an autonomous, DnaK-independent fashion. Unfolded proteins bind initially to DnaJ; upon interaction with the DnaJ-bound protein, DnaK hydrolyzes its bound ATP, resulting in the formation of a stable complex. GrpE releases ADP from DnaK; ATP binding to DnaK triggers the release of the substrate protein, thus completing the reaction cycle. Several rounds of ATP-dependent interactions between DnaJ, DnaK and GrpE are required for fully efficient folding. Also involved, together with DnaK and GrpE, in the DNA replication of plasmids through activation of initiation proteins. The polypeptide is Chaperone protein DnaJ (Pseudomonas paraeruginosa (strain DSM 24068 / PA7) (Pseudomonas aeruginosa (strain PA7))).